Reading from the N-terminus, the 328-residue chain is Sialic acid-binding Ig-like lectin 15 (328 aa).

Residues 1-19 form the signal peptide; sequence MEKSIWLLACLAWVLPTGS. Residues 20-263 lie on the Extracellular side of the membrane; that stretch reads FVRTKIDTTE…RFHGASGAST (244 aa). Residues 40–158 enclose the Ig-like V-type domain; the sequence is PAQRWSMQVP…DVHDRYESRH (119 aa). Intrachain disulfides connect cysteine 64–cysteine 142 and cysteine 95–cysteine 104. Arginine 143 is a binding site for N-acetylneuraminate. The 84-residue stretch at 168–251 folds into the Ig-like C2-type domain; that stretch reads PRIVNISVLP…SLGRSEASVY (84 aa). N-linked (GlcNAc...) asparagine glycosylation occurs at asparagine 172. A disulfide bridge links cysteine 187 with cysteine 237. A helical transmembrane segment spans residues 264-284; that stretch reads VALLLGALGFKALLLLGVLAA. The Cytoplasmic segment spans residues 285 to 328; that stretch reads RAARRRPEHLDTPDTPPRSQAQESNYENLSQMNPRSPPATMCSP. The interval 289-328 is disordered; that stretch reads RRPEHLDTPDTPPRSQAQESNYENLSQMNPRSPPATMCSP. Polar residues predominate over residues 301-318; the sequence is PRSQAQESNYENLSQMNP.

The protein belongs to the immunoglobulin superfamily. SIGLEC (sialic acid binding Ig-like lectin) family. Interacts with TYROBP and HCST. Expressed in macrophage and/or dendritic cells of spleen and lymph nodes.

It is found in the membrane. Its function is as follows. Binds sialylated glycoproteins. The protein is Sialic acid-binding Ig-like lectin 15 (SIGLEC15) of Homo sapiens (Human).